The sequence spans 391 residues: 23S rRNA (uracil(747)-C(5))-methyltransferase RlmC (391 aa).

Residues Cys-5, Cys-13, Cys-16, and Cys-95 each contribute to the [4Fe-4S] cluster site. Residues Gln-220, Phe-249, Glu-276, and Asn-322 each coordinate S-adenosyl-L-methionine. Cys-349 serves as the catalytic Nucleophile.

This sequence belongs to the class I-like SAM-binding methyltransferase superfamily. RNA M5U methyltransferase family. RlmC subfamily.

It carries out the reaction uridine(747) in 23S rRNA + S-adenosyl-L-methionine = 5-methyluridine(747) in 23S rRNA + S-adenosyl-L-homocysteine + H(+). Its function is as follows. Catalyzes the formation of 5-methyl-uridine at position 747 (m5U747) in 23S rRNA. This is 23S rRNA (uracil(747)-C(5))-methyltransferase RlmC from Actinobacillus pleuropneumoniae serotype 5b (strain L20).